The chain runs to 296 residues: 4-diphosphocytidyl-2-C-methyl-D-erythritol kinase (296 aa).

Lys-18 is an active-site residue. Residue 103–113 (PHGAGLGGGSS) participates in ATP binding. Asp-146 is a catalytic residue.

Belongs to the GHMP kinase family. IspE subfamily.

It catalyses the reaction 4-CDP-2-C-methyl-D-erythritol + ATP = 4-CDP-2-C-methyl-D-erythritol 2-phosphate + ADP + H(+). Its pathway is isoprenoid biosynthesis; isopentenyl diphosphate biosynthesis via DXP pathway; isopentenyl diphosphate from 1-deoxy-D-xylulose 5-phosphate: step 3/6. Catalyzes the phosphorylation of the position 2 hydroxy group of 4-diphosphocytidyl-2C-methyl-D-erythritol. This chain is 4-diphosphocytidyl-2-C-methyl-D-erythritol kinase, found in Solidesulfovibrio magneticus (strain ATCC 700980 / DSM 13731 / RS-1) (Desulfovibrio magneticus).